The chain runs to 88 residues: NADH-ubiquinone oxidoreductase chain 4L (88 aa).

Transmembrane regions (helical) follow at residues 22 to 42 (IILM…LVLV) and 57 to 77 (IYII…LVAY).

This sequence belongs to the complex I subunit 4L family.

The protein resides in the mitochondrion membrane. The enzyme catalyses a ubiquinone + NADH + 5 H(+)(in) = a ubiquinol + NAD(+) + 4 H(+)(out). Functionally, core subunit of the mitochondrial membrane respiratory chain NADH dehydrogenase (Complex I) that is believed to belong to the minimal assembly required for catalysis. Complex I functions in the transfer of electrons from NADH to the respiratory chain. The immediate electron acceptor for the enzyme is believed to be ubiquinone. The chain is NADH-ubiquinone oxidoreductase chain 4L (ND4L) from Trimorphomyces papilionaceus (Jelly fungus).